The chain runs to 264 residues: Phosphonoacetaldehyde hydrolase (264 aa).

Catalysis depends on D9, which acts as the Nucleophile. Mg(2+) contacts are provided by D9 and A11. K50 acts as the Schiff-base intermediate with substrate in catalysis. D183 provides a ligand contact to Mg(2+).

It belongs to the HAD-like hydrolase superfamily. PhnX family. In terms of assembly, homodimer. Mg(2+) serves as cofactor.

It catalyses the reaction phosphonoacetaldehyde + H2O = acetaldehyde + phosphate + H(+). Its function is as follows. Involved in phosphonate degradation. In Bacillus cereus (strain B4264), this protein is Phosphonoacetaldehyde hydrolase.